We begin with the raw amino-acid sequence, 203 residues long: UPF0637 protein Sca_0732 (203 aa).

Belongs to the UPF0637 family.

In Staphylococcus carnosus (strain TM300), this protein is UPF0637 protein Sca_0732.